Here is a 2713-residue protein sequence, read N- to C-terminus: Histone-lysine N-methyltransferase 2B (2713 aa).

The span at 1-11 shows a compositional bias: gly residues; sequence MAAAAGGGSCP. Disordered regions lie at residues 1-65, 82-524, and 542-783; these read MAAA…GEDT, RLWA…PTVV, and VSAR…ARVA. The residue at position 2 (Ala-2) is an N-acetylalanine. Low complexity predominate over residues 12–24; that stretch reads GPGSARGRFPGRP. Residues 17-36 carry the Menin-binding motif (MBM) motif; that stretch reads RGRFPGRPRGSGGGGGRGGR. Composition is skewed to gly residues over residues 25–38 and 49–60; these read RGSGGGGGRGGRGN and RGGGAAGPGGAE. The segment at residues 37–44 is a DNA-binding region (a.T hook 1); that stretch reads GNGAERVR. The span at 109 to 123 shows a compositional bias: acidic residues; that stretch reads PEEESSDGESEEEEF. Positions 110–117 form a DNA-binding region, a.T hook 2; the sequence is EEESSDGE. Phosphoserine occurs at positions 113, 114, and 118. Basic residues predominate over residues 144–158; it reads QRGRAPRGRGRKHKT. The segment covering 340 to 360 has biased composition (basic and acidic residues); it reads PQRKDGDEPERGSCRKKQEQK. Positions 357-365 form a DNA-binding region, a.T hook 3; it reads QEQKLEEEE. The segment covering 361 to 393 has biased composition (acidic residues); the sequence is LEEEEEEEEKEGEEKEEKDDNEDNNKQEEEEET. A compositionally biased stretch (basic and acidic residues) spans 394 to 412; that stretch reads ERAVAEEEAMLAKEKEEAK. Residues 414–460 show a composition bias toward pro residues; sequence PSPPLTPPVPSPPPPLPPPSTSPPPPASPLPPPVSPPPPLSPPPYPA. A compositionally biased stretch (low complexity) spans 501-517; sequence GTLSPTPNPSTTTGSPL. Over residues 555–566 the composition is skewed to basic and acidic residues; the sequence is RFMDEDPPKPPK. The span at 577-605 shows a compositional bias: pro residues; the sequence is ATSPPAPQEPVPVSSPPRVPTPPSTPVPL. Residues 606–617 are compositionally biased toward basic and acidic residues; it reads PEKRRSILREPT. Over residues 627-645 the composition is skewed to pro residues; sequence LPPPPPAPPPAPSPPPAPA. 3 stretches are compositionally biased toward low complexity: residues 646-657, 715-728, and 738-756; these read TPSRRPLLLRAP, VPVVTSPVKVEVPP, and QQLQLQQPPQALQTQLLPQ. Positions 757-774 are enriched in pro residues; the sequence is ALPPQQPQAQPPPSPQHT. Residue Lys-810 forms a Glycyl lysine isopeptide (Lys-Gly) (interchain with G-Cter in SUMO2) linkage. Ser-826, Ser-849, and Ser-866 each carry phosphoserine. Disordered stretches follow at residues 831-872 and 899-964; these read TEEA…QGPR and SALP…HHGK. Basic and acidic residues predominate over residues 841–862; it reads TPDRGCVRSEDESMEAKRDRAS. Residues 912 to 922 show a composition bias toward low complexity; it reads EDTSSASETES. Ser-941 carries the post-translational modification Phosphoserine. A compositionally biased stretch (basic residues) spans 953-964; that stretch reads TPRRSLPSHHGK. The CXXC-type zinc-finger motif lies at 964–1011; that stretch reads KKMRMARCGHCRGCLRVQDCGSCVNCLDKPKFGGPNTKKQCCVYRKCD. Zn(2+) contacts are provided by Cys-971, Cys-974, Cys-977, Cys-983, Cys-986, Cys-989, Cys-1005, and Cys-1010. 2 disordered regions span residues 1032 to 1076 and 1088 to 1138; these read LLPW…DSLL and QRPS…LQPV. A phosphoserine mark is found at Ser-1037, Ser-1040, Ser-1098, and Ser-1101. Lys-1142 participates in a covalent cross-link: Glycyl lysine isopeptide (Lys-Gly) (interchain with G-Cter in SUMO2). PHD-type zinc fingers lie at residues 1207–1258, 1255–1309, and 1341–1402; these read PMVC…CKFC, CKFC…CVRC, and GNYC…CAGA. Positions 1410–1510 constitute a Bromo domain; sequence ALSGALQGGL…GLLLKLLESA (101 aa). The interval 1550 to 1572 is disordered; the sequence is RQQESETPESGQPPGDPSAAFQS. The C2HC pre-PHD-type zinc-finger motif lies at 1584–1624; it reads PRQCALCLKYGDADSKEAGRLLYIGQNEWTHVNCAIWSAEV. The PHD-type 4 zinc-finger motif lies at 1645–1692; that stretch reads MRCELCLKPGATVGCCLSSCLSNFHFMCARASYCIFQDDKKVFCQKHT. Residues 1733–1789 form the FYR N-terminal domain; the sequence is VINVLIGSIRINSLGTLSDLSDCEGRLFPIGYQCSRLYWSTVDARRRCWYRCRILEY. A compositionally biased stretch (polar residues) spans 1808–1821; it reads QTIVHSPTPSSDTD. Disordered stretches follow at residues 1808–1973, 2056–2104, 2116–2160, 2279–2356, and 2382–2408; these read QTIV…GPDF, QLDG…PPED, NLGG…RTFA, VSTF…RCPL, and YSAGEASSSEEEPPSPEDKENQVPKRV. Low complexity-rich tracts occupy residues 1872-1890 and 1923-1933; these read PLGGVSFGPLPSPGSPSSL and RRTSSPLRTSP. Residues Ser-1926 and Ser-1932 each carry the phosphoserine modification. Positions 1939–1950 are enriched in polar residues; sequence LSTSVTALTPTS. Over residues 2058–2068 the composition is skewed to acidic residues; that stretch reads DGVDDGTDSEA. Phosphothreonine is present on residues Thr-2064 and Thr-2079. Positions 2084-2093 are enriched in gly residues; sequence PGVGRGGVLG. The span at 2140 to 2153 shows a compositional bias: polar residues; that stretch reads NGSQPPQSLSTSPA. Phosphoserine occurs at positions 2286 and 2346. The FYR C-terminal domain maps to 2409–2490; it reads GPHLRFEISS…QRCQHYKFRY (82 aa). Positions 2506–2511 match the WDR5 interaction motif (WIN) motif; sequence GAARAE. An SET domain is found at 2573 to 2689; sequence EAVGVYRSAI…RGEELTYDYK (117 aa). S-adenosyl-L-methionine contacts are provided by residues His-2583, Arg-2585, Tyr-2627, and 2650–2651; that span reads NH. Zn(2+) contacts are provided by Cys-2653 and Cys-2701. A Post-SET domain is found at 2697 to 2713; sequence NKLPCNCGAKRCRRFLN. S-adenosyl-L-methionine is bound at residue Asn-2702. The Zn(2+) site is built by Cys-2703 and Cys-2708.

It belongs to the class V-like SAM-binding methyltransferase superfamily. Histone-lysine methyltransferase family. TRX/MLL subfamily. In terms of assembly, component of the menin-associated histone methyltransferase complex, at least composed of KMT2B/MLL4, ASH2L, RBBP5, WDR5, DPY30, MEN1; the complex interacts with POLR2A and POLR2B via MEN1. Interacts with NFE2. Interacts with KDM6B. Interacts (via WIN motif) with WDR5. Interacts (via MBM motif) with MEN1.

Its subcellular location is the nucleus. It carries out the reaction L-lysyl(4)-[histone H3] + S-adenosyl-L-methionine = N(6)-methyl-L-lysyl(4)-[histone H3] + S-adenosyl-L-homocysteine + H(+). It catalyses the reaction N(6)-methyl-L-lysyl(4)-[histone H3] + S-adenosyl-L-methionine = N(6),N(6)-dimethyl-L-lysyl(4)-[histone H3] + S-adenosyl-L-homocysteine + H(+). In terms of biological role, histone methyltransferase that catalyzes methyl group transfer from S-adenosyl-L-methionine to the epsilon-amino group of 'Lys-4' of histone H3 (H3K4) via a non-processive mechanism. Part of chromatin remodeling machinery predominantly forms H3K4me1 and H3K4me2 methylation marks at active chromatin sites where transcription and DNA repair take place. Likely plays a redundant role with KMT2C in enriching H3K4me1 marks on primed and active enhancer elements. Plays a central role in beta-globin locus transcription regulation by being recruited by NFE2. Plays an important role in controlling bulk H3K4me during oocyte growth and preimplantation development. Required during the transcriptionally active period of oocyte growth for the establishment and/or maintenance of bulk H3K4 trimethylation (H3K4me3), global transcriptional silencing that preceeds resumption of meiosis, oocyte survival and normal zygotic genome activation. The chain is Histone-lysine N-methyltransferase 2B (Kmt2b) from Mus musculus (Mouse).